The following is a 76-amino-acid chain: MSKRPTIDTTHIMRRAEELISASSNRYRITVQVANRAKKRRRRENLEDFEDAGMKSVMQAIIEMSDELTQPEIIGE.

The protein belongs to the RNA polymerase subunit omega family. As to quaternary structure, in cyanobacteria the RNAP catalytic core is composed of 2 alpha, 1 beta, 1 beta', 1 gamma and 1 omega subunit. When a sigma factor is associated with the core the holoenzyme is formed, which can initiate transcription.

It carries out the reaction RNA(n) + a ribonucleoside 5'-triphosphate = RNA(n+1) + diphosphate. Functionally, promotes RNA polymerase assembly. Latches the N- and C-terminal regions of the beta' subunit thereby facilitating its interaction with the beta and alpha subunits. The chain is DNA-directed RNA polymerase subunit omega from Acaryochloris marina (strain MBIC 11017).